The primary structure comprises 300 residues: Transmembrane protein 158 (300 aa).

A signal peptide spans 1–20; sequence MLPLLAALLAAACPLPPVRG. N-linked (GlcNAc...) asparagine glycosylation occurs at N75. The next 2 helical transmembrane spans lie at 231–251 and 273–293; these read LVIV…IAGF and VPAG…AAAV.

This sequence belongs to the TMEM158 family. N-glycosylated.

Its subcellular location is the membrane. Its function is as follows. Receptor for brain injury-derived neurotrophic peptide (BINP), a synthetic 13-mer peptide. The polypeptide is Transmembrane protein 158 (TMEM158) (Homo sapiens (Human)).